Here is a 504-residue protein sequence, read N- to C-terminus: L-carnitine/gamma-butyrobetaine antiporter (504 aa).

12 helical membrane passes run 10-30, 51-71, 92-112, 143-163, 195-215, 231-251, 263-283, 316-336, 347-367, 398-418, 446-466, and 475-495; these read IEPKVFFPPLIIVGILCWLTV, WGWAFEWYMVVMLFGWFWLVF, IFMMFASCTSAAVLFWGSIEI, GPLPWATYSFLSVAFAYFFFV, FYLVALIFAMGTSLGLATPLV, LDAIIITCWIILHAICVACGL, SYLSFLMLGWVFIVSGASFIM, WTVFYWAWWVIYAIQMSIFLA, LCFGMVMGLTASTWILWTVLG, WAALPLSTATMWGFFILCFIA, LLVRIGWSILVGIIGIVLLAL, and AIIAGGCPLFFVNIMVTLSFI.

Belongs to the BCCT transporter (TC 2.A.15) family. CaiT subfamily. In terms of assembly, homotrimer.

It is found in the cell inner membrane. The catalysed reaction is 4-(trimethylamino)butanoate(in) + (R)-carnitine(out) = 4-(trimethylamino)butanoate(out) + (R)-carnitine(in). It participates in amine and polyamine metabolism; carnitine metabolism. Catalyzes the exchange of L-carnitine for gamma-butyrobetaine. The chain is L-carnitine/gamma-butyrobetaine antiporter from Shigella flexneri serotype 5b (strain 8401).